A 298-amino-acid chain; its full sequence is N-acetylmuramic acid 6-phosphate etherase (298 aa).

In terms of domain architecture, SIS spans 55-218; sequence IHTQVSGGGR…STGLMIKSGK (164 aa). Residue Glu-83 is the Proton donor of the active site. Glu-114 is an active-site residue.

It belongs to the GCKR-like family. MurNAc-6-P etherase subfamily. Homodimer.

It catalyses the reaction N-acetyl-D-muramate 6-phosphate + H2O = N-acetyl-D-glucosamine 6-phosphate + (R)-lactate. It functions in the pathway amino-sugar metabolism; 1,6-anhydro-N-acetylmuramate degradation. It participates in amino-sugar metabolism; N-acetylmuramate degradation. The protein operates within cell wall biogenesis; peptidoglycan recycling. Specifically catalyzes the cleavage of the D-lactyl ether substituent of MurNAc 6-phosphate, producing GlcNAc 6-phosphate and D-lactate. Together with AnmK, is also required for the utilization of anhydro-N-acetylmuramic acid (anhMurNAc) either imported from the medium or derived from its own cell wall murein, and thus plays a role in cell wall recycling. This chain is N-acetylmuramic acid 6-phosphate etherase, found in Escherichia coli O6:K15:H31 (strain 536 / UPEC).